We begin with the raw amino-acid sequence, 280 residues long: PsbP domain-containing protein 7, chloroplastic (280 aa).

Residues 1 to 36 (MSLKPYFSLLYSSPTNVKLSNFLIAQQPSGDLKTTP) constitute a chloroplast transit peptide.

The protein belongs to the PsbP family.

Its subcellular location is the plastid. The protein localises to the chloroplast. This is PsbP domain-containing protein 7, chloroplastic (PPD7) from Arabidopsis thaliana (Mouse-ear cress).